Here is a 341-residue protein sequence, read N- to C-terminus: Barley B recombinant-like protein A (341 aa).

The span at 48–62 shows a compositional bias: basic residues; it reads HQHQQHVPHHHHQPH. Disordered stretches follow at residues 48 to 95 and 150 to 234; these read HQHQ…MNFA and MQQQ…RKNI. A compositionally biased stretch (low complexity) spans 68–77; that stretch reads GANGNANGGA. The span at 78-90 shows a compositional bias: pro residues; the sequence is MPPPPATEAPPSM. A compositionally biased stretch (basic residues) spans 190–211; sequence PKKRQQGRQPKVPRAKKPKKSA.

Belongs to the BBR/BPC family.

Its subcellular location is the nucleus. Functionally, transcriptional regulator that specifically binds to GA-rich elements (GAGA-repeats) present in regulatory sequences of genes involved in developmental processes. In Oryza sativa subsp. japonica (Rice), this protein is Barley B recombinant-like protein A.